Reading from the N-terminus, the 91-residue chain is Large ribosomal subunit protein uL23c (91 aa).

The protein belongs to the universal ribosomal protein uL23 family. In terms of assembly, part of the 50S ribosomal subunit.

The protein resides in the plastid. The protein localises to the chloroplast. Its function is as follows. Binds to 23S rRNA. The sequence is that of Large ribosomal subunit protein uL23c (rpl23) from Pinus thunbergii (Japanese black pine).